The chain runs to 482 residues: ATP synthase subunit beta (482 aa).

Glycine 161–threonine 168 lines the ATP pocket.

The protein belongs to the ATPase alpha/beta chains family. F-type ATPases have 2 components, CF(1) - the catalytic core - and CF(0) - the membrane proton channel. CF(1) has five subunits: alpha(3), beta(3), gamma(1), delta(1), epsilon(1). CF(0) has three main subunits: a(1), b(2) and c(9-12). The alpha and beta chains form an alternating ring which encloses part of the gamma chain. CF(1) is attached to CF(0) by a central stalk formed by the gamma and epsilon chains, while a peripheral stalk is formed by the delta and b chains.

The protein resides in the cell inner membrane. The enzyme catalyses ATP + H2O + 4 H(+)(in) = ADP + phosphate + 5 H(+)(out). Functionally, produces ATP from ADP in the presence of a proton gradient across the membrane. The catalytic sites are hosted primarily by the beta subunits. This chain is ATP synthase subunit beta, found in Anaeromyxobacter dehalogenans (strain 2CP-C).